A 1243-amino-acid polypeptide reads, in one-letter code: Serine/threonine-protein kinase/endoribonuclease IRE1 (1243 aa).

Positions 1 to 35 are cleaved as a signal peptide; sequence MMRRPPSQGRWSASHQKLLLAFAFILIPWLQLADA. At 36 to 585 the chain is on the lumenal side; sequence QQQPQQPQIR…VKALPQSAAN (550 aa). Disordered regions lie at residues 70–132 and 149–172; these read HAAP…KPNY and QPVR…GLAS. Residues 73 to 85 show a composition bias toward basic and acidic residues; sequence PDVHPEAKFDTVN. Polar residues predominate over residues 90-99; it reads QQSTASPQQH. Positions 163–172 are enriched in low complexity; that stretch reads SSSAASGLAS. Asn226, Asn470, and Asn554 each carry an N-linked (GlcNAc...) asparagine glycan. A helical membrane pass occupies residues 586–606; that stretch reads SVIDFVSNPILIIFLIGSLIY. The Cytoplasmic portion of the chain corresponds to 607–1243; the sequence is NEKKLRRSYH…FREYYEPAGL (637 aa). The disordered stretch occupies residues 638–765; that stretch reads GDESGDDKDG…QSHENDPALT (128 aa). The segment covering 650 to 660 has biased composition (low complexity); the sequence is PSSPSPRSQPQ. Residues 674–693 are compositionally biased toward basic and acidic residues; the sequence is ERNAGDQDKVKDNRSLHDVS. Residues 732 to 749 show a composition bias toward basic residues; that stretch reads KKKKAHRGRRGGVKHRKG. Residues 809–1105 enclose the Protein kinase domain; it reads VDTDVELGMG…SREVMAHPFF (297 aa). Residues 815-823 and Lys837 each bind ATP; that span reads LGMGSNGTV. 4 residues coordinate ADP: Ser819, Lys837, Glu881, and Cys883. The active-site Proton acceptor is the Asp931. Asn936 and Asp953 together coordinate Mg(2+). In terms of domain architecture, KEN spans 1108 to 1240; the sequence is PKKRLAFLCD…TDRFREYYEP (133 aa).

The protein belongs to the protein kinase superfamily. Ser/Thr protein kinase family. Mg(2+) serves as cofactor. In terms of processing, autophosphorylated mainly on serine residues; phosphorylation enables nucleotide binding by the active site.

It is found in the endoplasmic reticulum membrane. The catalysed reaction is L-seryl-[protein] + ATP = O-phospho-L-seryl-[protein] + ADP + H(+). The enzyme catalyses L-threonyl-[protein] + ATP = O-phospho-L-threonyl-[protein] + ADP + H(+). Its function is as follows. Senses unfolded proteins in the lumen of the endoplasmic reticulum via its N-terminal domain which leads to enzyme auto-activation. The active endoribonuclease domain splices precursor mRNAs to produce their mature form which then induces transcription of UPR target genes. The sequence is that of Serine/threonine-protein kinase/endoribonuclease IRE1 from Hypocrea jecorina (strain QM6a) (Trichoderma reesei).